The following is a 429-amino-acid chain: Methanol:N,N-dimethyl-4-nitrosoaniline oxidoreductase (429 aa).

Belongs to the iron-containing alcohol dehydrogenase family. As to quaternary structure, homodecamer. Mg(2+) serves as cofactor. The cofactor is Zn(2+). It depends on NADPH as a cofactor.

The catalysed reaction is methanol + A = formaldehyde + AH2. Inhibited by azide and hydrazine. Catalyzes the oxidation of methanol to yield formaldehyde. While the in vivo electron acceptor is not known, N,N-dimethyl-4-nitrosoaniline (NDMA) can serve this function in vitro and is reduced to 4-(hydroxylamino)-N,N-dimethylaniline. It can also use various other primary alcohols, polyols and formaldehyde. In addition, MNO is able to produce methylformate from methanol plus formaldehyde, and possesses a formaldehyde dismutase and a NADH-dependent formaldehyde reductase activity. This chain is Methanol:N,N-dimethyl-4-nitrosoaniline oxidoreductase (mno), found in Amycolatopsis methanolica.